The chain runs to 229 residues: Chromophore lyase CpcT/CpeT 1 (229 aa).

This sequence belongs to the CpcT/CpeT biliprotein lyase family.

Its function is as follows. Covalently attaches a chromophore to Cys residue(s) of phycobiliproteins. The chain is Chromophore lyase CpcT/CpeT 1 from Gloeobacter violaceus (strain ATCC 29082 / PCC 7421).